A 343-amino-acid polypeptide reads, in one-letter code: CRISPR-associated endonuclease Cas1 1 (343 aa).

Mn(2+) contacts are provided by E166, H234, and E249.

It belongs to the CRISPR-associated endonuclease Cas1 family. As to quaternary structure, homodimer, forms a heterotetramer with a Cas2 homodimer. Requires Mg(2+) as cofactor. Mn(2+) serves as cofactor.

In terms of biological role, CRISPR (clustered regularly interspaced short palindromic repeat), is an adaptive immune system that provides protection against mobile genetic elements (viruses, transposable elements and conjugative plasmids). CRISPR clusters contain spacers, sequences complementary to antecedent mobile elements, and target invading nucleic acids. CRISPR clusters are transcribed and processed into CRISPR RNA (crRNA). Acts as a dsDNA endonuclease. Involved in the integration of spacer DNA into the CRISPR cassette. The sequence is that of CRISPR-associated endonuclease Cas1 1 from Chlorobaculum tepidum (strain ATCC 49652 / DSM 12025 / NBRC 103806 / TLS) (Chlorobium tepidum).